Consider the following 610-residue polypeptide: Dihydroxy-acid dehydratase (610 aa).

D81 is a Mg(2+) binding site. C122 is a [2Fe-2S] cluster binding site. Positions 123 and 124 each coordinate Mg(2+). K124 carries the N6-carboxylysine modification. C193 is a binding site for [2Fe-2S] cluster. A Mg(2+)-binding site is contributed by E489. S515 functions as the Proton acceptor in the catalytic mechanism.

This sequence belongs to the IlvD/Edd family. Homodimer. It depends on [2Fe-2S] cluster as a cofactor. Requires Mg(2+) as cofactor.

The catalysed reaction is (2R)-2,3-dihydroxy-3-methylbutanoate = 3-methyl-2-oxobutanoate + H2O. It catalyses the reaction (2R,3R)-2,3-dihydroxy-3-methylpentanoate = (S)-3-methyl-2-oxopentanoate + H2O. Its pathway is amino-acid biosynthesis; L-isoleucine biosynthesis; L-isoleucine from 2-oxobutanoate: step 3/4. It participates in amino-acid biosynthesis; L-valine biosynthesis; L-valine from pyruvate: step 3/4. In terms of biological role, functions in the biosynthesis of branched-chain amino acids. Catalyzes the dehydration of (2R,3R)-2,3-dihydroxy-3-methylpentanoate (2,3-dihydroxy-3-methylvalerate) into 2-oxo-3-methylpentanoate (2-oxo-3-methylvalerate) and of (2R)-2,3-dihydroxy-3-methylbutanoate (2,3-dihydroxyisovalerate) into 2-oxo-3-methylbutanoate (2-oxoisovalerate), the penultimate precursor to L-isoleucine and L-valine, respectively. In Xylella fastidiosa (strain 9a5c), this protein is Dihydroxy-acid dehydratase.